We begin with the raw amino-acid sequence, 285 residues long: 2,3,4,5-tetrahydropyridine-2,6-dicarboxylate N-succinyltransferase (285 aa).

This sequence belongs to the transferase hexapeptide repeat family.

The protein localises to the cytoplasm. The enzyme catalyses (S)-2,3,4,5-tetrahydrodipicolinate + succinyl-CoA + H2O = (S)-2-succinylamino-6-oxoheptanedioate + CoA. It participates in amino-acid biosynthesis; L-lysine biosynthesis via DAP pathway; LL-2,6-diaminopimelate from (S)-tetrahydrodipicolinate (succinylase route): step 1/3. This chain is 2,3,4,5-tetrahydropyridine-2,6-dicarboxylate N-succinyltransferase, found in Beijerinckia indica subsp. indica (strain ATCC 9039 / DSM 1715 / NCIMB 8712).